Reading from the N-terminus, the 172-residue chain is UPF0398 protein gbs0290 (172 aa).

It belongs to the UPF0398 family.

This chain is UPF0398 protein gbs0290, found in Streptococcus agalactiae serotype III (strain NEM316).